The primary structure comprises 147 residues: Hemoglobin subunit beta-3 (147 aa).

The 145-residue stretch at 3–147 folds into the Globin domain; it reads HWTAEEKAVI…LVDALSHSYH (145 aa). Residues His-64 and His-93 each coordinate heme b.

The protein belongs to the globin family. As to quaternary structure, heterotetramer of two alpha chains and two beta chains. In terms of tissue distribution, red blood cells.

This is a tadpole (larval) beta chain. In Aquarana catesbeiana (American bullfrog), this protein is Hemoglobin subunit beta-3.